The following is a 424-amino-acid chain: UPF0053 protein MG146 (424 aa).

The CNNM transmembrane domain occupies 6 to 191 (SGLTLTVIIL…EQNGLFSKED (186 aa)). 4 helical membrane passes run 7–27 (GLTL…STVV), 71–91 (LITI…ILFL), 101–121 (LLSS…FCEI), and 135–155 (LVLF…ITKL). 2 CBS domains span residues 210 to 270 (MIKW…PKSL) and 272 to 332 (LNQL…IYDE).

It belongs to the UPF0053 family.

Its subcellular location is the cell membrane. The sequence is that of UPF0053 protein MG146 from Mycoplasma genitalium (strain ATCC 33530 / DSM 19775 / NCTC 10195 / G37) (Mycoplasmoides genitalium).